We begin with the raw amino-acid sequence, 125 residues long: MICLFKINGKIASRKKITNAIYCLEQNQENEISELFETGSVDAQNIFNEGNADATIQIVELPNLDKATIKLALFSTLSCIGEDSPDGLPERYHQIFKRLGNELIDMDIDYDKVLSKLVKLAEVIQ.

This is an uncharacterized protein from Mycoplasma (Bacteriophage L2).